A 1579-amino-acid polypeptide reads, in one-letter code: MAP kinase kinase kinase SSK2 (1579 aa).

Residues 1–70 (MSHSDYFNYK…HSTQYFRSPN (70 aa)) are disordered. Low complexity predominate over residues 21–44 (SSKMRQSSSSSSSRLRSESLGRNS). Positions 45-67 (NTTQARVASSPISPGLHSTQYFR) are enriched in polar residues. Residues Ser-57, Ser-62, Ser-78, and Ser-118 each carry the phosphoserine modification. 2 disordered regions span residues 97–155 (FFHQ…ESEI) and 190–243 (SIMS…GSTT). The span at 104–118 (SGSSSSSARSSRRPS) shows a compositional bias: low complexity. Polar residues predominate over residues 127–139 (NPQQSLPKLSTQP). Basic and acidic residues predominate over residues 144–155 (KKVEASKTESEI). A Phosphoserine modification is found at Ser-290. The Protein kinase domain maps to 1266–1558 (WQKRNFIGGG…AVELLMDPWI (293 aa)). ATP is bound by residues 1272–1280 (IGGGTFGRV) and Lys-1295. Residue Asp-1390 is the Proton acceptor of the active site. Residue Ser-1424 is modified to Phosphoserine.

Belongs to the protein kinase superfamily. STE Ser/Thr protein kinase family. MAP kinase kinase kinase subfamily. In terms of assembly, interacts with by SSK1.

The catalysed reaction is L-seryl-[protein] + ATP = O-phospho-L-seryl-[protein] + ADP + H(+). It carries out the reaction L-threonyl-[protein] + ATP = O-phospho-L-threonyl-[protein] + ADP + H(+). Its function is as follows. Kinase involved in a signal transduction pathway that is activated by changes in the osmolarity of the extracellular environment. Activates the PBS2 MAP kinase kinase by phosphorylation. In Saccharomyces cerevisiae (strain ATCC 204508 / S288c) (Baker's yeast), this protein is MAP kinase kinase kinase SSK2 (SSK2).